The sequence spans 84 residues: Exodeoxyribonuclease 7 small subunit (84 aa).

It belongs to the XseB family. Heterooligomer composed of large and small subunits.

It localises to the cytoplasm. It carries out the reaction Exonucleolytic cleavage in either 5'- to 3'- or 3'- to 5'-direction to yield nucleoside 5'-phosphates.. In terms of biological role, bidirectionally degrades single-stranded DNA into large acid-insoluble oligonucleotides, which are then degraded further into small acid-soluble oligonucleotides. The protein is Exodeoxyribonuclease 7 small subunit of Azoarcus sp. (strain BH72).